Here is a 1297-residue protein sequence, read N- to C-terminus: MFQIFRGSPALSEFRLNQLSARFQKADLPVKSCYAEYLHFADLSAGLSAEETDELEQLLHYGPTLAQHESKGECFVVIPRVGTISSWSSKATDIAHNCGLDKVVRLERGIAYYFEFERTLSAEQQQRLVSHIHDRMMETVVRAPEQAAVLFDSQDPKPFTTVDILNGGRKALEIANVELGLALASDEMDYLVENFTALGRNPNDIELYMFAQANSEHCRHKIFNADWVIDGEKQEKSLFKMIKNTFEKTPDHVLSAYKDNAAVMEGSKVGRFFADQDGQYRYHNEDAHILMKVETHNHPTAISPFPGAATGSGGEIRDEGATGRGAKPKAGLVGFSVSNLVIPGFEQPWENELSKPSRISSALDIMIEGPLGGAAFNNEFGRPALLGYFRTYEEKVNSFAGEEVRGYHKPIMLAGGIGNIRAEHVQKGEIPVGAKLIVLGGPAMNIGLGGGAASSMTSGKSKEDLDFASVQRDNPEMERRCQEVIDRCWQMGEGNPIAFIHDVGAGGLSNAMPELVHDGGRGGKFELRNILCDERGMSPLEIWCNESQERYVLAVAPENLAVFEELCQRERAPYAIIGEATEEEHLTLHDNHFDNNPIDLPMSLLLGKTPKMTRDVKSTQVNNSPVDQTNIELKEAFHRVLRLPVVAEKTFLITIGDRTVTGMVARDQMVGPWQIPVSDVAVTTAALDTYHGEAMSIGERAPVALLDFAASARLAVAESITNIAATNIGDIKRIKLSANWMSAAGHEGEDAGLYEAVKAVGEELCPALGLTVPVGKDSMSMKTTWSENGEQKTVTAPLSLVISAFARVEDVRKTVTPQLRTDKGETALLLIDLGEGKNRLGATALAQVYKQLGDKPADVVNVELLKGFYNAMQTLVQQGKLLAYHDRSDGGLIVTLAEMAFAGNCGIRAEISALGDNDLGILFSEELGAVIQVRESDLAAVREVLTQHGLIHLTKDLGLVTEYDEFEIKRGTKVVLSEKRSELRGIWAELTHQMQRLRDNPECADQEFAAKKDPANQGFSAHLTYDINEDVAAPYIATGKKPRIAVLREQGVNSHVEMGAAFDRAGFEAIDVHMSDLHTARQNLKDFNALVACGGFSYGDVLGAGGGWAKSVLFNTALRDQFQAFFEREDTLALGVCNGCQMISTLADIIPGTENWPRFVRNTSERFEARAALVRINESNSVWFQGMAGSHMPIAVSHGEGRVEFKNDSQLQGLRDQGLIIAQYVDNNIRPTEVYPANPNGSVDGITALSNTNGRVAIMMPHPERVFRTVSNSWHPEDWSEDGAWMRLFRNARVFFK.

Residues 305–324 (FPGAATGSGGEIRDEGATGR) are disordered. 307 to 318 (GAATGSGGEIRD) serves as a coordination point for ATP. Mg(2+) contacts are provided by D679, E718, N722, and D886. S888 lines the ATP pocket. The Glutamine amidotransferase type-1 domain maps to 1044 to 1297 (IAVLREQGVN…LFRNARVFFK (254 aa)). The active-site Nucleophile is the C1137. Active-site residues include H1262 and E1264.

In the N-terminal section; belongs to the FGAMS family. In terms of assembly, monomer.

It is found in the cytoplasm. It carries out the reaction N(2)-formyl-N(1)-(5-phospho-beta-D-ribosyl)glycinamide + L-glutamine + ATP + H2O = 2-formamido-N(1)-(5-O-phospho-beta-D-ribosyl)acetamidine + L-glutamate + ADP + phosphate + H(+). It participates in purine metabolism; IMP biosynthesis via de novo pathway; 5-amino-1-(5-phospho-D-ribosyl)imidazole from N(2)-formyl-N(1)-(5-phospho-D-ribosyl)glycinamide: step 1/2. Its function is as follows. Phosphoribosylformylglycinamidine synthase involved in the purines biosynthetic pathway. Catalyzes the ATP-dependent conversion of formylglycinamide ribonucleotide (FGAR) and glutamine to yield formylglycinamidine ribonucleotide (FGAM) and glutamate. This chain is Phosphoribosylformylglycinamidine synthase, found in Mannheimia succiniciproducens (strain KCTC 0769BP / MBEL55E).